Consider the following 178-residue polypeptide: Ribosome maturation factor RimM (178 aa).

Residues 101–178 (ADEYYWYQLV…VMRVEWDADF (78 aa)) enclose the PRC barrel domain.

The protein belongs to the RimM family. Binds ribosomal protein uS19.

The protein localises to the cytoplasm. Its function is as follows. An accessory protein needed during the final step in the assembly of 30S ribosomal subunit, possibly for assembly of the head region. Essential for efficient processing of 16S rRNA. May be needed both before and after RbfA during the maturation of 16S rRNA. It has affinity for free ribosomal 30S subunits but not for 70S ribosomes. This chain is Ribosome maturation factor RimM, found in Pseudomonas putida (strain ATCC 700007 / DSM 6899 / JCM 31910 / BCRC 17059 / LMG 24140 / F1).